The following is a 345-amino-acid chain: Fructose-1,6-bisphosphatase class 1 (345 aa).

Positions 90, 109, 111, and 112 each coordinate Mg(2+). Residues 112–115 and Asn199 each bind substrate; that span reads DGSS. Mg(2+) is bound at residue Glu271.

This sequence belongs to the FBPase class 1 family. As to quaternary structure, homotetramer. The cofactor is Mg(2+).

Its subcellular location is the cytoplasm. The catalysed reaction is beta-D-fructose 1,6-bisphosphate + H2O = beta-D-fructose 6-phosphate + phosphate. It participates in carbohydrate biosynthesis; Calvin cycle. The polypeptide is Fructose-1,6-bisphosphatase class 1 (Rhodopseudomonas palustris (strain BisB5)).